Here is a 150-residue protein sequence, read N- to C-terminus: Putative solute carrier family 19 member 4 (150 aa).

The tract at residues 118-137 (PSVREGACNEKSTENKKPQD) is disordered. The span at 124 to 136 (ACNEKSTENKKPQ) shows a compositional bias: basic and acidic residues.

The protein belongs to the reduced folate carrier (RFC) transporter (TC 2.A.48) family.

In Homo sapiens (Human), this protein is Putative solute carrier family 19 member 4.